Here is a 136-residue protein sequence, read N- to C-terminus: ATP synthase epsilon chain (136 aa).

This sequence belongs to the ATPase epsilon chain family. In terms of assembly, F-type ATPases have 2 components, CF(1) - the catalytic core - and CF(0) - the membrane proton channel. CF(1) has five subunits: alpha(3), beta(3), gamma(1), delta(1), epsilon(1). CF(0) has three main subunits: a, b and c.

It is found in the cell inner membrane. Functionally, produces ATP from ADP in the presence of a proton gradient across the membrane. The sequence is that of ATP synthase epsilon chain from Persephonella marina (strain DSM 14350 / EX-H1).